The primary structure comprises 366 residues: 3-dehydroquinate synthase (366 aa).

NAD(+) contacts are provided by residues 75-80 (DGEQYK), 109-113 (GVIGD), 133-134 (TT), Lys146, Lys155, and 173-176 (CLST). Zn(2+) is bound by residues Glu188, His251, and His268.

The protein belongs to the sugar phosphate cyclases superfamily. Dehydroquinate synthase family. Requires NAD(+) as cofactor. The cofactor is Co(2+). Zn(2+) is required as a cofactor.

The protein localises to the cytoplasm. It carries out the reaction 7-phospho-2-dehydro-3-deoxy-D-arabino-heptonate = 3-dehydroquinate + phosphate. It participates in metabolic intermediate biosynthesis; chorismate biosynthesis; chorismate from D-erythrose 4-phosphate and phosphoenolpyruvate: step 2/7. Its function is as follows. Catalyzes the conversion of 3-deoxy-D-arabino-heptulosonate 7-phosphate (DAHP) to dehydroquinate (DHQ). The sequence is that of 3-dehydroquinate synthase from Vibrio parahaemolyticus serotype O3:K6 (strain RIMD 2210633).